Reading from the N-terminus, the 318-residue chain is Ferrochelatase (318 aa).

2 residues coordinate Fe cation: His-186 and Glu-264.

Belongs to the ferrochelatase family.

The protein resides in the cytoplasm. The catalysed reaction is heme b + 2 H(+) = protoporphyrin IX + Fe(2+). It functions in the pathway porphyrin-containing compound metabolism; protoheme biosynthesis; protoheme from protoporphyrin-IX: step 1/1. Catalyzes the ferrous insertion into protoporphyrin IX. This Chlamydia abortus (strain DSM 27085 / S26/3) (Chlamydophila abortus) protein is Ferrochelatase.